Consider the following 347-residue polypeptide: Dihydroorotase (347 aa).

Residues histidine 14 and histidine 16 each contribute to the Zn(2+) site. Residues 16–18 (HLR) and asparagine 42 each bind substrate. Zn(2+) is bound by residues lysine 100, histidine 137, and histidine 175. Lysine 100 bears the N6-carboxylysine mark. Substrate is bound at residue histidine 137. Leucine 220 contacts substrate. Aspartate 248 is a binding site for Zn(2+). The active site involves aspartate 248. The substrate site is built by histidine 252 and alanine 264.

This sequence belongs to the metallo-dependent hydrolases superfamily. DHOase family. Class II DHOase subfamily. Homodimer. Zn(2+) is required as a cofactor.

The enzyme catalyses (S)-dihydroorotate + H2O = N-carbamoyl-L-aspartate + H(+). Its pathway is pyrimidine metabolism; UMP biosynthesis via de novo pathway; (S)-dihydroorotate from bicarbonate: step 3/3. In terms of biological role, catalyzes the reversible cyclization of carbamoyl aspartate to dihydroorotate. In Pseudomonas syringae pv. tomato (strain ATCC BAA-871 / DC3000), this protein is Dihydroorotase.